Here is a 525-residue protein sequence, read N- to C-terminus: GMP synthase [glutamine-hydrolyzing] (525 aa).

Residues 8-206 enclose the Glutamine amidotransferase type-1 domain; the sequence is PLLILDFGSQ…VVDICKASTD (199 aa). The Nucleophile role is filled by C85. Catalysis depends on residues H180 and E182. The GMPS ATP-PPase domain maps to 207-400; the sequence is WTPEHIIDEA…LGLPHDMVYR (194 aa). Residue 234-240 participates in ATP binding; it reads SGGVDSS.

As to quaternary structure, homodimer.

It catalyses the reaction XMP + L-glutamine + ATP + H2O = GMP + L-glutamate + AMP + diphosphate + 2 H(+). Its pathway is purine metabolism; GMP biosynthesis; GMP from XMP (L-Gln route): step 1/1. Functionally, catalyzes the synthesis of GMP from XMP. This chain is GMP synthase [glutamine-hydrolyzing], found in Legionella pneumophila subsp. pneumophila (strain Philadelphia 1 / ATCC 33152 / DSM 7513).